The primary structure comprises 314 residues: MSRPRRRGRDINGVLLLDKSQGMSSNDALQKVKRIYNANRAGHTGALDPLATGMLPICLGEATKFSQYLLDSDKRYRVIARLGQRTDTSDADGQIVEERPVTFSAEQLAAALDTFRGDIEQIPSMYSALKYQGKKLYEYARQGIEVPREARPITVYELLFIRHEGNELELEIHCSKGTYIRTIIDDLGEKLGCGAHVIYLRRLAVSKYPVERMVTLEHLRELVEQAEQQDIPAAELLDPLLMPMDSPASDYPVVNLPLTSSVYFKNGNPVRTSGAPLEGLVRVTEGENGKFIGMGEIDDEGRVAPRRLVVEYPA.

Residue H43 participates in substrate binding. The active-site Nucleophile is D48. Residues Y76, Y179, and L200 each coordinate substrate.

This sequence belongs to the pseudouridine synthase TruB family. Type 1 subfamily.

It catalyses the reaction uridine(55) in tRNA = pseudouridine(55) in tRNA. In terms of biological role, responsible for synthesis of pseudouridine from uracil-55 in the psi GC loop of transfer RNAs. This chain is tRNA pseudouridine synthase B, found in Escherichia coli O139:H28 (strain E24377A / ETEC).